The following is a 261-amino-acid chain: 4-hydroxy-tetrahydrodipicolinate reductase (261 aa).

8-13 is an NAD(+) binding site; it reads GYKGRM. NADP(+) is bound at residue Arg-36. Residues 95–97 and 121–124 contribute to the NAD(+) site; these read GTT and APNF. The Proton donor/acceptor role is filled by His-151. Position 152 (His-152) interacts with (S)-2,3,4,5-tetrahydrodipicolinate. Lys-155 serves as the catalytic Proton donor. Residue 161–162 participates in (S)-2,3,4,5-tetrahydrodipicolinate binding; that stretch reads GT.

This sequence belongs to the DapB family.

Its subcellular location is the cytoplasm. It catalyses the reaction (S)-2,3,4,5-tetrahydrodipicolinate + NAD(+) + H2O = (2S,4S)-4-hydroxy-2,3,4,5-tetrahydrodipicolinate + NADH + H(+). The catalysed reaction is (S)-2,3,4,5-tetrahydrodipicolinate + NADP(+) + H2O = (2S,4S)-4-hydroxy-2,3,4,5-tetrahydrodipicolinate + NADPH + H(+). Its pathway is amino-acid biosynthesis; L-lysine biosynthesis via DAP pathway; (S)-tetrahydrodipicolinate from L-aspartate: step 4/4. Functionally, catalyzes the conversion of 4-hydroxy-tetrahydrodipicolinate (HTPA) to tetrahydrodipicolinate. This chain is 4-hydroxy-tetrahydrodipicolinate reductase, found in Lactiplantibacillus plantarum (strain ATCC BAA-793 / NCIMB 8826 / WCFS1) (Lactobacillus plantarum).